A 100-amino-acid chain; its full sequence is uncharacterized protein (100 aa).

Residues 62–82 (IPIVIIVSIFILLIIGSISLY) form a helical membrane-spanning segment.

Its subcellular location is the membrane. This is an uncharacterized protein from Dictyostelium discoideum (Social amoeba).